The chain runs to 180 residues: Adenine phosphoribosyltransferase (180 aa).

It belongs to the purine/pyrimidine phosphoribosyltransferase family. Homodimer.

The protein localises to the cytoplasm. It catalyses the reaction AMP + diphosphate = 5-phospho-alpha-D-ribose 1-diphosphate + adenine. Its pathway is purine metabolism; AMP biosynthesis via salvage pathway; AMP from adenine: step 1/1. Its function is as follows. Catalyzes a salvage reaction resulting in the formation of AMP, that is energically less costly than de novo synthesis. This chain is Adenine phosphoribosyltransferase, found in Actinobacillus succinogenes (strain ATCC 55618 / DSM 22257 / CCUG 43843 / 130Z).